Reading from the N-terminus, the 137-residue chain is Peptide methionine sulfoxide reductase MsrB (137 aa).

The MsrB domain occupies 7-129; the sequence is AEELKKNLSD…NSASLRFTDG (123 aa). Zn(2+)-binding residues include cysteine 46, cysteine 49, cysteine 95, and cysteine 98. Cysteine 118 (nucleophile) is an active-site residue.

It belongs to the MsrB Met sulfoxide reductase family. Requires Zn(2+) as cofactor.

It catalyses the reaction L-methionyl-[protein] + [thioredoxin]-disulfide + H2O = L-methionyl-(R)-S-oxide-[protein] + [thioredoxin]-dithiol. In Shigella dysenteriae serotype 1 (strain Sd197), this protein is Peptide methionine sulfoxide reductase MsrB.